The primary structure comprises 316 residues: L-lactate dehydrogenase 3 (316 aa).

The NAD(+) site is built by Val-16, Asp-37, Arg-42, and Tyr-68. Arg-91 serves as a coordination point for substrate. NAD(+) contacts are provided by residues Ser-104, 121–123, and Thr-146; that span reads ASN. Residue 123–126 coordinates substrate; that stretch reads NPVD. Residue 151 to 154 participates in substrate binding; sequence DSSR. Arg-156 and His-171 together coordinate beta-D-fructose 1,6-bisphosphate. The Proton acceptor role is filled by His-178. Thr-233 serves as a coordination point for substrate.

It belongs to the LDH/MDH superfamily. LDH family. Homotetramer.

The protein resides in the cytoplasm. It carries out the reaction (S)-lactate + NAD(+) = pyruvate + NADH + H(+). It participates in fermentation; pyruvate fermentation to lactate; (S)-lactate from pyruvate: step 1/1. Allosterically activated by fructose 1,6-bisphosphate (FBP). Functionally, catalyzes the conversion of lactate to pyruvate. This Bacillus thuringiensis subsp. konkukian (strain 97-27) protein is L-lactate dehydrogenase 3.